We begin with the raw amino-acid sequence, 146 residues long: MKDELNKVVIYTDGACSGNPGPGGWGAILLFDKNERTICGNNPDTTNNRMELTAVIEALKFLKVAYNVDLYTDSIYVKDGITLWIEKWKINGWRTASKLPVKNLELWLELDSLASFHNVTWYWVKAHAGNLYNQKADILARSQISK.

An RNase H type-1 domain is found at 4-145; sequence ELNKVVIYTD…ADILARSQIS (142 aa). Mg(2+)-binding residues include aspartate 13, glutamate 51, aspartate 73, and aspartate 137.

It belongs to the RNase H family. In terms of assembly, monomer. Requires Mg(2+) as cofactor.

It is found in the cytoplasm. It catalyses the reaction Endonucleolytic cleavage to 5'-phosphomonoester.. In terms of biological role, endonuclease that specifically degrades the RNA of RNA-DNA hybrids. This chain is Ribonuclease H, found in Ehrlichia canis (strain Jake).